A 591-amino-acid chain; its full sequence is MKKISLPKIGIRPVIDGRRMGVRESLEEQTMNMAKATAALLTEKLRHACGAAVECVISDTCIAGMAEAAACEEKFSSQNVGLTITVTPCWCYGSETIDMDPTRPKAIWGFNGTERPGAVYLAAALAAHSQKGIPAFSIYGHDVQDADDTSIPADVEEKLLRFARAGLAVASMKGKSYLSLGGVSMGIAGSIVDHNFFESWLGMKVQAVDMTELRRRIDQKIYDEAELEMALAWADKNFRYGEDENNKQYQRNAEQSRAVLRESLLMAMCIRDMMQGNSKLTDIGRVEESLGYNAIAAGFQGQRHWTDQYPNGDTAEAILNSSFDWNGVREPFVVATENDSLNGVAMLMGHQLTGTAQVFADVRTYWSPEAIERVTGHKLDGLAEHGIIHLINSGSAALDGSCKQRDSEGNPTMKPHWEISQQEADACLAATEWCPAIHEYFRGGGYSSRFLTEGGVPFTMTRVNIIKGLGPVLQIAEGWSVELPKDVHDILNKRTNSTWPTTWFAPRLTGKGPFTDVYSVMANWGANHGVLTIGHVGADFITLASMLRIPVCMHNVEETKVYRPSAWAAHGMDIEGQDYRACQNYGPLYKR.

Residues Glu-337 and Asp-361 each act as proton acceptor in the active site. Mn(2+) contacts are provided by Glu-337, Asp-361, and His-528.

The protein belongs to the L-fucose isomerase family. Homohexamer. The cofactor is Mn(2+).

It localises to the cytoplasm. It catalyses the reaction L-fucose = L-fuculose. It functions in the pathway carbohydrate degradation; L-fucose degradation; L-lactaldehyde and glycerone phosphate from L-fucose: step 1/3. Its function is as follows. Converts the aldose L-fucose into the corresponding ketose L-fuculose. The polypeptide is L-fucose isomerase (Escherichia coli O17:K52:H18 (strain UMN026 / ExPEC)).